We begin with the raw amino-acid sequence, 290 residues long: 33 kDa chaperonin (290 aa).

2 disulfide bridges follow: C235-C237 and C268-C271.

The protein belongs to the HSP33 family. Post-translationally, under oxidizing conditions two disulfide bonds are formed involving the reactive cysteines. Under reducing conditions zinc is bound to the reactive cysteines and the protein is inactive.

The protein resides in the cytoplasm. In terms of biological role, redox regulated molecular chaperone. Protects both thermally unfolding and oxidatively damaged proteins from irreversible aggregation. Plays an important role in the bacterial defense system toward oxidative stress. The chain is 33 kDa chaperonin from Streptococcus pneumoniae serotype 19F (strain G54).